An 84-amino-acid chain; its full sequence is Insulin-like peptide 05 (84 aa).

The signal sequence occupies residues 1 to 22 (MKTPILFVVVVAVLIVTDSAEG). Residues 23-37 (FKGKANSFLKPLQRR) constitute a propeptide that is removed on maturation. Disulfide bonds link Cys43-Cys48, Cys44-Cys73, and Cys57-Cys61.

This sequence belongs to the insulin family.

It is found in the secreted. In terms of biological role, insulin decreases blood glucose concentration. May have evolved to activate insulin receptors (INSR) in vertebrates. Molecular docking studies reveals unique interaction with the human insulin receptor. In vivo, insulin-like peptide injection reduces blood glucose levels in two models of zebrafish diabetes (streptozotocin- and glucose-induced). Also shorter swimming distance of zebrafish larvae, an effect which is not observed with human insulin. The sequence is that of Insulin-like peptide 05 from Exaiptasia diaphana (Tropical sea anemone).